The primary structure comprises 544 residues: Ceramide glucosyltransferase (544 aa).

Residues 1-15 (MVQEELSLFRITTGY) lie on the Lumenal side of the membrane. Residues 16 to 36 (FFLLWYIIILVAAYSGFFEIL) form a helical membrane-spanning segment. The Cytoplasmic segment spans residues 37 to 427 (FNFRNRPILH…LATLIEPTTE (391 aa)). A short sequence motif (D1) is located at residue Asp109. Asp171 is a short sequence motif (D2). Residue Asp364 is a short sequence motif, D3. Residue Asp364 is the Proton acceptor of the active site. Positions 404-408 (RRVRW) match the (Q/R)XXRW motif. A helical transmembrane segment spans residues 428–448 (SIICGIYGTYAISTVFFGTWF). The Lumenal segment spans residues 449–451 (NKY). A helical membrane pass occupies residues 452 to 472 (WFVMHMLIWMLTDYVQYHTLI). Over 473–501 (NHTLDVKNITYLPNWLNESIPPKQRNCLQ) the chain is Cytoplasmic. Residues 502 to 522 (WGYIWILRELLALPIWIIAMI) form a helical membrane-spanning segment. Over 523-544 (GHEIDWRGRPFRIKKDLTAEEM) the chain is Lumenal.

Belongs to the glycosyltransferase 2 family.

Its subcellular location is the golgi apparatus membrane. The catalysed reaction is an N-acylsphing-4-enine + UDP-alpha-D-glucose = a beta-D-glucosyl-(1&lt;-&gt;1')-N-acylsphing-4-enine + UDP + H(+). It functions in the pathway lipid metabolism; sphingolipid metabolism. Catalyzes the final step in the biosynthesis of the membrane lipid glucosylceramide (GluCer), the transfer of glucose to ceramide. Glucosylceramides play important roles in growth, differentiation and pathogenicity. This is Ceramide glucosyltransferase from Candida albicans (strain SC5314 / ATCC MYA-2876) (Yeast).